We begin with the raw amino-acid sequence, 347 residues long: NADH-ubiquinone oxidoreductase chain 2 (347 aa).

A run of 11 helical transmembrane segments spans residues 3–23 (PPIL…VMLS), 25–45 (HWLL…PVLM), 66–86 (ASML…QWVV), 96–116 (IMMT…FWVP), 122–142 (ITLT…MSVL), 149–169 (INTN…GWGG), 178–198 (IMAY…IYNP), 201–221 (MILN…LFML), 237–257 (FPLI…LPPL), 274–294 (NMII…YFYL), and 323–343 (TILL…TPML).

The protein belongs to the complex I subunit 2 family. Core subunit of respiratory chain NADH dehydrogenase (Complex I) which is composed of 45 different subunits. Interacts with TMEM242.

It is found in the mitochondrion inner membrane. The catalysed reaction is a ubiquinone + NADH + 5 H(+)(in) = a ubiquinol + NAD(+) + 4 H(+)(out). In terms of biological role, core subunit of the mitochondrial membrane respiratory chain NADH dehydrogenase (Complex I) which catalyzes electron transfer from NADH through the respiratory chain, using ubiquinone as an electron acceptor. Essential for the catalytic activity and assembly of complex I. This is NADH-ubiquinone oxidoreductase chain 2 from Canis rufus (Red wolf).